The sequence spans 399 residues: Octopine dehydrogenase (399 aa).

NADH contacts are provided by residues 10-13 (GGNG) and 35-38 (FADE). Residues glutamine 118 and threonine 143 each coordinate pyruvate. A substrate-binding site is contributed by glutamine 118. An NAD(+)-binding site is contributed by cysteine 148. L-arginine is bound at residue methionine 206. Pyruvate is bound at residue histidine 212. Histidine 212 is an active-site residue. Arginine 324 is an NAD(+) binding site.

Belongs to the lysopine/nopaline/octopine/opine/vitopine dehydrogenases family.

It catalyses the reaction D-octopine + NAD(+) + H2O = L-arginine + pyruvate + NADH + H(+). Agmatine acts as a competitive inhibitor of the condensation reaction where the L-arginine and agmatine substrates compete for the same site. Functionally, catalyzes the reverse reaction of octopine dehydrogenation. Acts on L-arginine in preference to other substrates such as canavanine, cysteine, L-alanine, ornithine or norvaline, owing to the presence of the positively charged guanidium group. This is Octopine dehydrogenase from Pecten maximus (King scallop).